A 543-amino-acid chain; its full sequence is CTP synthase (543 aa).

The segment at 1–265 (MARYIFITGG…DGEVLRHFGL (265 aa)) is amidoligase domain. S13 contributes to the CTP binding site. S13 contributes to the UTP binding site. Position 14-19 (14-19 (SLGKGL)) interacts with ATP. Y54 provides a ligand contact to L-glutamine. D71 contributes to the ATP binding site. Residues D71 and E139 each contribute to the Mg(2+) site. Residues 146 to 148 (DIE), 186 to 191 (KTKPTQ), and K222 each bind CTP. UTP contacts are provided by residues 186–191 (KTKPTQ) and K222. Positions 290–542 (TIGVVGKYVG…IAAAVKQARL (253 aa)) constitute a Glutamine amidotransferase type-1 domain. G354 lines the L-glutamine pocket. C381 functions as the Nucleophile; for glutamine hydrolysis in the catalytic mechanism. L-glutamine-binding positions include 382 to 385 (LGMQ), E405, and R470. Residues H515 and E517 contribute to the active site.

This sequence belongs to the CTP synthase family. Homotetramer.

The catalysed reaction is UTP + L-glutamine + ATP + H2O = CTP + L-glutamate + ADP + phosphate + 2 H(+). The enzyme catalyses L-glutamine + H2O = L-glutamate + NH4(+). It carries out the reaction UTP + NH4(+) + ATP = CTP + ADP + phosphate + 2 H(+). The protein operates within pyrimidine metabolism; CTP biosynthesis via de novo pathway; CTP from UDP: step 2/2. Allosterically activated by GTP, when glutamine is the substrate; GTP has no effect on the reaction when ammonia is the substrate. The allosteric effector GTP functions by stabilizing the protein conformation that binds the tetrahedral intermediate(s) formed during glutamine hydrolysis. Inhibited by the product CTP, via allosteric rather than competitive inhibition. Functionally, catalyzes the ATP-dependent amination of UTP to CTP with either L-glutamine or ammonia as the source of nitrogen. Regulates intracellular CTP levels through interactions with the four ribonucleotide triphosphates. The chain is CTP synthase from Novosphingobium aromaticivorans (strain ATCC 700278 / DSM 12444 / CCUG 56034 / CIP 105152 / NBRC 16084 / F199).